Here is a 23-residue protein sequence, read N- to C-terminus: Potassium channel toxin kappa-KTx 1.3 (23 aa).

2 disulfide bridges follow: Cys4/Cys22 and Cys8/Cys18.

Belongs to the short scorpion toxin superfamily. Potassium channel inhibitor kappa-KTx family. Kappa-KTx 1 subfamily. Monomer. In terms of processing, is not amidated. As to expression, expressed by the venom gland.

The protein localises to the secreted. Its function is as follows. Shows very weak blocking activity on voltage-gated potassium channels Kv10.1/KCNH1/EAG1 (6.2% inhibition by 40 uM of the toxin). Has no effect on the other voltage-gated potassium channels tested. In Heterometrus spinifer (Asia giant forest scorpion), this protein is Potassium channel toxin kappa-KTx 1.3.